An 89-amino-acid chain; its full sequence is NADH-ubiquinone oxidoreductase chain 4L (89 aa).

3 helical membrane passes run Met1–Asn21, Ile22–Ile42, and Phe55–Val75.

Belongs to the complex I subunit 4L family.

It localises to the mitochondrion membrane. The enzyme catalyses a ubiquinone + NADH + 5 H(+)(in) = a ubiquinol + NAD(+) + 4 H(+)(out). Core subunit of the mitochondrial membrane respiratory chain NADH dehydrogenase (Complex I) that is believed to belong to the minimal assembly required for catalysis. Complex I functions in the transfer of electrons from NADH to the respiratory chain. The immediate electron acceptor for the enzyme is believed to be ubiquinone. This Talaromyces marneffei (Penicillium marneffei) protein is NADH-ubiquinone oxidoreductase chain 4L (nd4L).